A 116-amino-acid polypeptide reads, in one-letter code: Aspartate 1-decarboxylase (116 aa).

The active-site Schiff-base intermediate with substrate; via pyruvic acid is Ser25. Ser25 bears the Pyruvic acid (Ser) mark. Position 57 (Thr57) interacts with substrate. Catalysis depends on Tyr58, which acts as the Proton donor. 73-75 (GAA) contributes to the substrate binding site.

This sequence belongs to the PanD family. In terms of assembly, heterooctamer of four alpha and four beta subunits. Pyruvate serves as cofactor. Post-translationally, is synthesized initially as an inactive proenzyme, which is activated by self-cleavage at a specific serine bond to produce a beta-subunit with a hydroxyl group at its C-terminus and an alpha-subunit with a pyruvoyl group at its N-terminus.

Its subcellular location is the cytoplasm. It catalyses the reaction L-aspartate + H(+) = beta-alanine + CO2. It functions in the pathway cofactor biosynthesis; (R)-pantothenate biosynthesis; beta-alanine from L-aspartate: step 1/1. Functionally, catalyzes the pyruvoyl-dependent decarboxylation of aspartate to produce beta-alanine. The chain is Aspartate 1-decarboxylase from Leptospira borgpetersenii serovar Hardjo-bovis (strain JB197).